The following is a 528-amino-acid chain: Movement protein TGB1 (528 aa).

Residues 1–13 (MDMTKTVEEKKTN) show a composition bias toward basic and acidic residues. The tract at residues 1–143 (MDMTKTVEEK…TKGSSQVGEN (143 aa)) is disordered. 2 consecutive repeat copies span residues 52–77 (VADQTPLSVDNGAKSKLDSSDRQVPG) and 78–103 (VADQTPLSVDNGAKSKLDSSDRQVPG). A 2 X 26 AA tandem repeats region spans residues 52–103 (VADQTPLSVDNGAKSKLDSSDRQVPGVADQTPLSVDNGAKSKLDSSDRQVPG). The tract at residues 75–491 (VPGVADQTPL…KSKLIIRADA (417 aa)) is interaction with the suppressor of RNA silencing Gamma-B. The span at 109–119 (NVKKSKKKRIQ) shows a compositional bias: basic residues. The nucleolar localization signal stretch occupies residues 111–120 (KKSKKKRIQK). One can recognise a (+)RNA virus helicase ATP-binding domain in the interval 236–379 (ARACTLERER…YLTLPVIYRS (144 aa)). The segment at 243-254 (RERLKRKLLLVR) is nuclear localization signal. Position 269–276 (269–276 (GVPGSGKS)) interacts with ATP. The (+)RNA virus helicase C-terminal domain occupies 380–520 (ETTYRLGQET…SHRYSAKPDE (141 aa)). The tract at residues 508–528 (ASNSHRYSAKPDEDHSWFKAK) is disordered. The segment covering 516–528 (AKPDEDHSWFKAK) has biased composition (basic and acidic residues).

It belongs to the virgaviridae/benyvirus TGB1 movement protein family. Homooligomer. Interacts with movement protein TGB3. TGB1-TGB3-TGB2 complex formation is enhanced by ATP hydrolysis. Interacts with the suppressor of RNA silencing Gamma-B (via N-terminus). The cofactor is Mg(2+).

The protein localises to the host cell junction. It localises to the host plasmodesma. Its subcellular location is the host nucleus. The protein resides in the host cytoplasm. It is found in the host nucleolus. The protein localises to the host cytoskeleton. It catalyses the reaction ATP + H2O = ADP + phosphate + H(+). ATPase activity is enhanced by the suppressor of RNA silencing Gamma-B. Functionally, participates in the transport of viral genome to neighboring plant cells directly through plasmodesmata, without any budding. Multifunctional movement protein with RNA-binding, ATPase and helicase activities. Engages in homologous interactions leading to the formation of a ribonucleoprotein complex containing plus-sense viral RNAs (vRNPs). ATPase activity is probably required for vRNPs movement complex assembly. Intracellular delivery of TGBp1-containing vRNPs to plasmodesmata is facilitated by TGBp2 and TGBp3. This chain is Movement protein TGB1, found in Barley stripe mosaic virus (BSMV).